The following is a 97-amino-acid chain: Large ribosomal subunit protein uL23 (97 aa).

Belongs to the universal ribosomal protein uL23 family. Part of the 50S ribosomal subunit. Contacts protein L29, and trigger factor when it is bound to the ribosome.

Its function is as follows. One of the early assembly proteins it binds 23S rRNA. One of the proteins that surrounds the polypeptide exit tunnel on the outside of the ribosome. Forms the main docking site for trigger factor binding to the ribosome. This Brachyspira hyodysenteriae (strain ATCC 49526 / WA1) protein is Large ribosomal subunit protein uL23.